The following is a 138-amino-acid chain: MAGLQRSTISFRRQGSSGIVWDDRLIAELSQQAANDRKGETLQQDEQAKLITSEVQDQTTKPIAGEGLKPIRTDGGMERSRSNGGGAIRHHRNTGRVSPAVDPPSPRLSAFGCCSAFGKKQPGKKVNQRKRPAKRRSR.

The disordered stretch occupies residues 52–138; that stretch reads TSEVQDQTTK…RKRPAKRRSR (87 aa). Basic and acidic residues predominate over residues 69–81; the sequence is KPIRTDGGMERSR. S98 carries the phosphoserine modification. S105 is subject to Phosphoserine; by MAPK6. Residues 121 to 138 are compositionally biased toward basic residues; sequence QPGKKVNQRKRPAKRRSR.

In terms of tissue distribution, expressed in developing cotyledons, mature cotyledons, cotyledon epidermis and stomata.

Its function is as follows. May play a role in the regulation of stomata patterning. The protein is MAPK kinase substrate protein At1g80180 of Arabidopsis thaliana (Mouse-ear cress).